A 201-amino-acid polypeptide reads, in one-letter code: Probable GTP-binding protein EngB (201 aa).

The EngB-type G domain maps to 25 to 199 (HGIEIAFIGY…KSKLNFWYEK (175 aa)). GTP contacts are provided by residues 33–40 (GYSNSGKS), 60–64 (GRTQL), 78–81 (DLPG), 145–148 (TKCD), and 178–180 (FSS). S40 and T62 together coordinate Mg(2+).

This sequence belongs to the TRAFAC class TrmE-Era-EngA-EngB-Septin-like GTPase superfamily. EngB GTPase family. Mg(2+) serves as cofactor.

Functionally, necessary for normal cell division and for the maintenance of normal septation. The chain is Probable GTP-binding protein EngB from Buchnera aphidicola subsp. Schizaphis graminum (strain Sg).